Here is a 184-residue protein sequence, read N- to C-terminus: MGLEEQLPGGILLSTVEKVAGYVRKNSLWPATFGLACCAIEMMATAGPRFDIARFGMERFSATPRQADLMIVAGRVSQKMAPVLRQIYDQMAEPKWVLAMGVCASSGGMFNNYAIVQGVDHVVPVDIYLPGCPPRPEMLLHAILKLHEKIQQMPLGINRERAIAEAEEAALLARPTIEMRGLLR.

4 residues coordinate [4Fe-4S] cluster: cysteine 37, cysteine 38, cysteine 103, and cysteine 132.

The protein belongs to the complex I 20 kDa subunit family. In terms of assembly, NDH-1 is composed of 14 different subunits. Subunits NuoB, C, D, E, F, and G constitute the peripheral sector of the complex. The cofactor is [4Fe-4S] cluster.

It is found in the cell membrane. It carries out the reaction a quinone + NADH + 5 H(+)(in) = a quinol + NAD(+) + 4 H(+)(out). Its function is as follows. NDH-1 shuttles electrons from NADH, via FMN and iron-sulfur (Fe-S) centers, to quinones in the respiratory chain. The immediate electron acceptor for the enzyme in this species is believed to be a menaquinone. Couples the redox reaction to proton translocation (for every two electrons transferred, four hydrogen ions are translocated across the cytoplasmic membrane), and thus conserves the redox energy in a proton gradient. This is NADH-quinone oxidoreductase subunit B from Mycobacterium bovis (strain BCG / Pasteur 1173P2).